The chain runs to 425 residues: Glutamate-1-semialdehyde 2,1-aminomutase (425 aa).

At Lys264 the chain carries N6-(pyridoxal phosphate)lysine.

Belongs to the class-III pyridoxal-phosphate-dependent aminotransferase family. HemL subfamily. Homodimer. Requires pyridoxal 5'-phosphate as cofactor.

It localises to the cytoplasm. It carries out the reaction (S)-4-amino-5-oxopentanoate = 5-aminolevulinate. It participates in porphyrin-containing compound metabolism; protoporphyrin-IX biosynthesis; 5-aminolevulinate from L-glutamyl-tRNA(Glu): step 2/2. The chain is Glutamate-1-semialdehyde 2,1-aminomutase from Campylobacter lari (strain RM2100 / D67 / ATCC BAA-1060).